We begin with the raw amino-acid sequence, 200 residues long: 3-isopropylmalate dehydratase small subunit (200 aa).

This sequence belongs to the LeuD family. LeuD type 1 subfamily. Heterodimer of LeuC and LeuD.

It carries out the reaction (2R,3S)-3-isopropylmalate = (2S)-2-isopropylmalate. The protein operates within amino-acid biosynthesis; L-leucine biosynthesis; L-leucine from 3-methyl-2-oxobutanoate: step 2/4. Its function is as follows. Catalyzes the isomerization between 2-isopropylmalate and 3-isopropylmalate, via the formation of 2-isopropylmaleate. This chain is 3-isopropylmalate dehydratase small subunit, found in Methylobacterium radiotolerans (strain ATCC 27329 / DSM 1819 / JCM 2831 / NBRC 15690 / NCIMB 10815 / 0-1).